We begin with the raw amino-acid sequence, 49 residues long: Large ribosomal subunit protein bL33A (49 aa).

Belongs to the bacterial ribosomal protein bL33 family.

This is Large ribosomal subunit protein bL33A from Bacillus pumilus (strain SAFR-032).